Reading from the N-terminus, the 399-residue chain is S-adenosylmethionine synthase (399 aa).

His17 serves as a coordination point for ATP. Asp19 lines the Mg(2+) pocket. Glu52 contacts K(+). L-methionine contacts are provided by Glu65 and Gln109. The flexible loop stretch occupies residues 109–119 (QSADIAQGVDA). ATP is bound by residues 177-179 (DSK), 243-244 (KF), Asp252, 258-259 (RK), Ala275, and Lys279. Asp252 serves as a coordination point for L-methionine. Lys283 lines the L-methionine pocket.

This sequence belongs to the AdoMet synthase family. As to quaternary structure, homotetramer; dimer of dimers. Mg(2+) is required as a cofactor. K(+) serves as cofactor.

The protein localises to the cytoplasm. It catalyses the reaction L-methionine + ATP + H2O = S-adenosyl-L-methionine + phosphate + diphosphate. The protein operates within amino-acid biosynthesis; S-adenosyl-L-methionine biosynthesis; S-adenosyl-L-methionine from L-methionine: step 1/1. Catalyzes the formation of S-adenosylmethionine (AdoMet) from methionine and ATP. The overall synthetic reaction is composed of two sequential steps, AdoMet formation and the subsequent tripolyphosphate hydrolysis which occurs prior to release of AdoMet from the enzyme. The polypeptide is S-adenosylmethionine synthase (Bradyrhizobium sp. (strain ORS 278)).